Reading from the N-terminus, the 128-residue chain is Large ribosomal subunit protein bL17 (128 aa).

The protein belongs to the bacterial ribosomal protein bL17 family. Part of the 50S ribosomal subunit. Contacts protein L32.

In Streptococcus pneumoniae serotype 4 (strain ATCC BAA-334 / TIGR4), this protein is Large ribosomal subunit protein bL17.